A 34-amino-acid polypeptide reads, in one-letter code: Calcitonin-like peptide 1 (34 aa).

Cysteine 2 and cysteine 7 are joined by a disulfide. Proline 34 carries the proline amide modification.

The sequence is that of Calcitonin-like peptide 1 from Odorrana schmackeri (Schmacker's frog).